Consider the following 303-residue polypeptide: Signal recognition particle receptor FtsY (303 aa).

Residues glycine 108 to threonine 115, aspartate 190 to arginine 194, and threonine 254 to aspartate 257 contribute to the GTP site.

This sequence belongs to the GTP-binding SRP family. FtsY subfamily. Part of the signal recognition particle protein translocation system, which is composed of SRP and FtsY. SRP is a ribonucleoprotein composed of Ffh and a 4.5S RNA molecule.

The protein resides in the cell inner membrane. It is found in the cytoplasm. The enzyme catalyses GTP + H2O = GDP + phosphate + H(+). Involved in targeting and insertion of nascent membrane proteins into the cytoplasmic membrane. Acts as a receptor for the complex formed by the signal recognition particle (SRP) and the ribosome-nascent chain (RNC). Interaction with SRP-RNC leads to the transfer of the RNC complex to the Sec translocase for insertion into the membrane, the hydrolysis of GTP by both Ffh and FtsY, and the dissociation of the SRP-FtsY complex into the individual components. This Rickettsia conorii (strain ATCC VR-613 / Malish 7) protein is Signal recognition particle receptor FtsY.